Reading from the N-terminus, the 330-residue chain is Aspartate--ammonia ligase (330 aa).

Belongs to the class-II aminoacyl-tRNA synthetase family. AsnA subfamily.

The protein localises to the cytoplasm. The catalysed reaction is L-aspartate + NH4(+) + ATP = L-asparagine + AMP + diphosphate + H(+). It functions in the pathway amino-acid biosynthesis; L-asparagine biosynthesis; L-asparagine from L-aspartate (ammonia route): step 1/1. This is Aspartate--ammonia ligase from Haemophilus influenzae (strain PittGG).